We begin with the raw amino-acid sequence, 96 residues long: Co-chaperonin GroES (96 aa).

The protein belongs to the GroES chaperonin family. In terms of assembly, heptamer of 7 subunits arranged in a ring. Interacts with the chaperonin GroEL.

The protein localises to the cytoplasm. Together with the chaperonin GroEL, plays an essential role in assisting protein folding. The GroEL-GroES system forms a nano-cage that allows encapsulation of the non-native substrate proteins and provides a physical environment optimized to promote and accelerate protein folding. GroES binds to the apical surface of the GroEL ring, thereby capping the opening of the GroEL channel. This is Co-chaperonin GroES from Acinetobacter baylyi (strain ATCC 33305 / BD413 / ADP1).